Consider the following 399-residue polypeptide: S-adenosylmethionine synthase (399 aa).

ATP is bound at residue His-15. Residue Asp-17 coordinates Mg(2+). Glu-43 serves as a coordination point for K(+). L-methionine is bound by residues Glu-56 and Gln-99. The flexible loop stretch occupies residues 99 to 109 (QSPDIAGGVDH). ATP is bound by residues 175–177 (DAK), 242–243 (RF), Asp-251, 257–258 (RK), Ala-274, and Lys-278. An L-methionine-binding site is contributed by Asp-251. Lys-282 lines the L-methionine pocket.

The protein belongs to the AdoMet synthase family. Homotetramer; dimer of dimers. Mg(2+) is required as a cofactor. The cofactor is K(+).

It localises to the cytoplasm. It catalyses the reaction L-methionine + ATP + H2O = S-adenosyl-L-methionine + phosphate + diphosphate. Its pathway is amino-acid biosynthesis; S-adenosyl-L-methionine biosynthesis; S-adenosyl-L-methionine from L-methionine: step 1/1. Catalyzes the formation of S-adenosylmethionine (AdoMet) from methionine and ATP. The overall synthetic reaction is composed of two sequential steps, AdoMet formation and the subsequent tripolyphosphate hydrolysis which occurs prior to release of AdoMet from the enzyme. This chain is S-adenosylmethionine synthase, found in Lactobacillus helveticus (strain DPC 4571).